Here is a 347-residue protein sequence, read N- to C-terminus: MKKVFISGGGTGGHFYPALSVAENLKEKGFSITYIGTTNGIENKKDFPADEKILYPMRAVRGKSIVGKIQGVFSLLSTTFKVYKQIKKEKPDFSICFGGYTSIPLGLASFLARVPLYIHEQNSIPSYSNKILSYFAKKVFITFELTAKYFDRKKTVLTGMPLRKNIIERAKNYVYKPNQTKTVLVVGGSQGAKKLSESIISLASEMKDIKFILIKGKWQVEVPNLENLTVYEYVDNMEDLYTSADVVISRSGSSSVNEILCFGKYAIFVPFPYAASNHQYYNVKWLKDLGLCELIEEKDLSKEVLKKALEDAFNKDLESLSKKIKEYAIFDSDEKIVENILNDFKND.

UDP-N-acetyl-alpha-D-glucosamine is bound by residues 11-13 (TGG), asparagine 122, arginine 163, serine 189, and glutamine 279.

This sequence belongs to the glycosyltransferase 28 family. MurG subfamily.

It localises to the cell inner membrane. It catalyses the reaction di-trans,octa-cis-undecaprenyl diphospho-N-acetyl-alpha-D-muramoyl-L-alanyl-D-glutamyl-meso-2,6-diaminopimeloyl-D-alanyl-D-alanine + UDP-N-acetyl-alpha-D-glucosamine = di-trans,octa-cis-undecaprenyl diphospho-[N-acetyl-alpha-D-glucosaminyl-(1-&gt;4)]-N-acetyl-alpha-D-muramoyl-L-alanyl-D-glutamyl-meso-2,6-diaminopimeloyl-D-alanyl-D-alanine + UDP + H(+). It functions in the pathway cell wall biogenesis; peptidoglycan biosynthesis. In terms of biological role, cell wall formation. Catalyzes the transfer of a GlcNAc subunit on undecaprenyl-pyrophosphoryl-MurNAc-pentapeptide (lipid intermediate I) to form undecaprenyl-pyrophosphoryl-MurNAc-(pentapeptide)GlcNAc (lipid intermediate II). The sequence is that of UDP-N-acetylglucosamine--N-acetylmuramyl-(pentapeptide) pyrophosphoryl-undecaprenol N-acetylglucosamine transferase from Sulfurihydrogenibium sp. (strain YO3AOP1).